The primary structure comprises 270 residues: Glutamate racemase (270 aa).

Substrate-binding positions include 10-11 (DS) and 42-43 (YG). Residue Cys74 is the Proton donor/acceptor of the active site. 75-76 (NT) provides a ligand contact to substrate. Residue Cys189 is the Proton donor/acceptor of the active site. 190 to 191 (TH) provides a ligand contact to substrate.

The protein belongs to the aspartate/glutamate racemases family.

It catalyses the reaction L-glutamate = D-glutamate. The protein operates within cell wall biogenesis; peptidoglycan biosynthesis. Its function is as follows. Provides the (R)-glutamate required for cell wall biosynthesis. The protein is Glutamate racemase of Bartonella henselae (strain ATCC 49882 / DSM 28221 / CCUG 30454 / Houston 1) (Rochalimaea henselae).